Here is a 502-residue protein sequence, read N- to C-terminus: Sulfate adenylyltransferase (502 aa).

The segment at 1 to 167 (MPSPHGGVLQ…LEAIQLPVHY (167 aa)) is N-terminal. The interval 168–393 (DYPGWRKTPA…LRESNPSRPK (226 aa)) is catalytic. Position 195 (glutamine 195) interacts with sulfate. ATP contacts are provided by residues 195-198 (QTRN) and 289-292 (GRDH). Residues threonine 196, arginine 197, and asparagine 198 contribute to the active site. Residue arginine 197 participates in sulfate binding. Residue alanine 293 participates in sulfate binding. Valine 331 serves as a coordination point for ATP. Positions 394–502 (QGFALVLSET…FLEDQGFFQF (109 aa)) are required for oligomerization; adenylyl-sulfate kinase-like.

It belongs to the sulfate adenylyltransferase family. As to quaternary structure, homohexamer. Dimer of trimers.

It localises to the cytoplasm. It catalyses the reaction sulfate + ATP + H(+) = adenosine 5'-phosphosulfate + diphosphate. Its pathway is sulfur metabolism; hydrogen sulfide biosynthesis; sulfite from sulfate: step 1/3. In terms of biological role, catalyzes the first intracellular reaction of sulfate assimilation, forming adenosine-5'-phosphosulfate (APS) from inorganic sulfate and ATP. Plays an important role in sulfate activation as a component of the biosynthesis pathway of sulfur-containing amino acids. The polypeptide is Sulfate adenylyltransferase (Kluyveromyces lactis (strain ATCC 8585 / CBS 2359 / DSM 70799 / NBRC 1267 / NRRL Y-1140 / WM37) (Yeast)).